A 175-amino-acid polypeptide reads, in one-letter code: NADH-ubiquinone oxidoreductase chain 6 (175 aa).

A run of 5 helical transmembrane segments spans residues 1 to 21 (MMTY…VGFA), 25 to 45 (SPIY…AIVL), 47 to 67 (FGGS…MLVV), 88 to 108 (AVLA…CYIL), and 149 to 169 (YGTW…LVIM).

Belongs to the complex I subunit 6 family. As to quaternary structure, core subunit of respiratory chain NADH dehydrogenase (Complex I) which is composed of 45 different subunits.

The protein resides in the mitochondrion inner membrane. It carries out the reaction a ubiquinone + NADH + 5 H(+)(in) = a ubiquinol + NAD(+) + 4 H(+)(out). In terms of biological role, core subunit of the mitochondrial membrane respiratory chain NADH dehydrogenase (Complex I) which catalyzes electron transfer from NADH through the respiratory chain, using ubiquinone as an electron acceptor. Essential for the catalytic activity and assembly of complex I. This is NADH-ubiquinone oxidoreductase chain 6 (MT-ND6) from Canis lupus familiaris (Dog).